The chain runs to 328 residues: Arabinose 5-phosphate isomerase KdsD (328 aa).

The SIS domain occupies 41 to 184 (ACEAIFRCHG…AVALLKARGF (144 aa)). Substrate contacts are provided by residues 75 to 76 (GT), H82, H88, 114 to 123 (TLIPVLKRQK), and 148 to 150 (NVP). H82 contributes to the Zn(2+) binding site. Positions 210–268 (MHTGTEIPTVSPDASLRDALLEITRKSLGLTVICDDSMRIKGIFTDGDLRRVFDMGIDL) constitute a CBS 1 domain. Position 275 (D275) interacts with substrate. Residues 277 to 328 (MTRGGIRVPPNILAVDALNLMESRHITALLVADGDQLLGVVHMHDMLRAGVV) enclose the CBS 2 domain.

It belongs to the SIS family. GutQ/KpsF subfamily. As to quaternary structure, homotetramer.

It carries out the reaction D-arabinose 5-phosphate = D-ribulose 5-phosphate. It participates in carbohydrate biosynthesis; 3-deoxy-D-manno-octulosonate biosynthesis; 3-deoxy-D-manno-octulosonate from D-ribulose 5-phosphate: step 1/3. It functions in the pathway bacterial outer membrane biogenesis; lipopolysaccharide biosynthesis. Its function is as follows. Involved in the biosynthesis of 3-deoxy-D-manno-octulosonate (KDO), a unique 8-carbon sugar component of lipopolysaccharides (LPSs). Catalyzes the reversible aldol-ketol isomerization between D-ribulose 5-phosphate (Ru5P) and D-arabinose 5-phosphate (A5P). This chain is Arabinose 5-phosphate isomerase KdsD (kdsD), found in Yersinia pestis.